The following is a 318-amino-acid chain: MLPLTMTVLILLLLPTGQAAPKDGVTRPDSEVQHQLLPNPFQPGQEQLGLLQSYLKGLGRTEVQLEHLSREQVLLYLFALHDYDQSGQLDGLELLSMLTAALAPGAANSPTTNPVILIVDKVLETQDLNGDGLMTPAELINFPGVALRHVEPGEPLAPSPQEPQAVGRQSLLAKSPLRQETQEAPGPREEAKGQVEARRESLDPVQEPGGQAEADGDVPGPRGEAEGQAEAKGDAPGPRGEAGGQAEAEGDAPGPRGEAGGQAEAEGDAPGPRGEAGGQAEARENGEEAKELPGETLESKNTQNDFEVHIVQVENDEI.

The first 19 residues, 1–19 (MLPLTMTVLILLLLPTGQA), serve as a signal peptide directing secretion. EF-hand domains follow at residues 69–104 (SREQ…ALAP) and 114–149 (PVIL…ALRH). Ca(2+) contacts are provided by aspartate 82, aspartate 84, serine 86, glutamine 88, glutamate 93, aspartate 127, asparagine 129, aspartate 131, and glutamate 138. Residues 177–318 (LRQETQEAPG…HIVQVENDEI (142 aa)) are disordered. 2 stretches are compositionally biased toward basic and acidic residues: residues 186–202 (GPRE…RESL) and 223–233 (GEAEGQAEAKG). 3 consecutive repeat copies span residues 219 to 235 (PGPR…KGDA), 236 to 252 (PGPR…EGDA), and 253 to 269 (PGPR…EGDA). The interval 219 to 286 (PGPRGEAEGQ…GGQAEARENG (68 aa)) is 4 X 17 AA approximate tandem repeats of P-G-P-R-G-E-A-G-G-Q-A-E-A-[KR]-G-D-A. Low complexity predominate over residues 235–272 (APGPRGEAGGQAEAEGDAPGPRGEAGGQAEAEGDAPGP). One copy of the 4; approximate repeat lies at 270 to 286 (PGPRGEAGGQAEARENG). The segment covering 281–293 (EARENGEEAKELP) has biased composition (basic and acidic residues).

Post-translationally, probably digested extracellularly by an unknown serine protease generating extremely hydrophobic bioactive peptides.

The protein localises to the secreted. Functionally, mediates cell-cell adhesion in a calcium-dependent manner. Able to inhibit growth in several cell lines. This is Cell growth regulator with EF hand domain protein 1 from Homo sapiens (Human).